The following is a 238-amino-acid chain: MARGQNIRKRTFSDMDTPSDKNIGIHTNSLPKNNLYRRILFKGKISNYSISKDSLAKDHSSKHSISKNGLIGKKRPAPLDISFQSMNSSISSSTQKKTRILDEEIKDQSLSNENDTDSPVIVDITLKPSYMSKTSRITEIIHKMKELNMNRIEDGSSFNKKRSEHDDKNILLHTMEMEEEDCEIEEDIAIDSPYLNTSLSEDDTDSIVGTDYSEKEKETISETESSSDDESYSLYDSF.

Basic residues predominate over residues 1–10 (MARGQNIRKR). Disordered regions lie at residues 1 to 26 (MARGQNIRKRTFSDMDTPSDKNIGIH) and 195 to 238 (LNTS…YDSF).

It belongs to the asfivirus DP238L family.

This is an uncharacterized protein from Ornithodoros (relapsing fever ticks).